A 152-amino-acid chain; its full sequence is Cytochrome c-type biogenesis protein CcmE 2 (152 aa).

The Cytoplasmic segment spans residues 1–8 (MNPQRRRR). A helical; Signal-anchor for type II membrane protein membrane pass occupies residues 9-29 (LWLVLALVLAGGLATTLVAMA). Residues 30 to 152 (LQRNVAYLYT…HQVAPAKVTQ (123 aa)) are Periplasmic-facing. Heme is bound by residues histidine 123 and tyrosine 127.

Belongs to the CcmE/CycJ family.

The protein resides in the cell inner membrane. In terms of biological role, heme chaperone required for the biogenesis of c-type cytochromes. Transiently binds heme delivered by CcmC and transfers the heme to apo-cytochromes in a process facilitated by CcmF and CcmH. This chain is Cytochrome c-type biogenesis protein CcmE 2, found in Xanthomonas campestris pv. campestris (strain 8004).